Consider the following 61-residue polypeptide: uncharacterized protein (61 aa).

Residues 34-61 (TDVEDIDRLISMLDDLEAKYERFKKDWE) are a coiled coil.

This is an uncharacterized protein from Bacillus subtilis (strain 168).